The sequence spans 252 residues: Cell division protein ZapD (252 aa).

Belongs to the ZapD family. Interacts with FtsZ.

It localises to the cytoplasm. Cell division factor that enhances FtsZ-ring assembly. Directly interacts with FtsZ and promotes bundling of FtsZ protofilaments, with a reduction in FtsZ GTPase activity. In Ralstonia pickettii (strain 12J), this protein is Cell division protein ZapD.